A 217-amino-acid polypeptide reads, in one-letter code: Non-structural protein NS3 (217 aa).

The protein belongs to the orbivirus NS3 family.

Functionally, may play a role in the release of virions from infected cells. The protein is Non-structural protein NS3 (Segment-10) of Camelus dromedarius (Dromedary).